We begin with the raw amino-acid sequence, 253 residues long: Large ribosomal subunit protein uL4 (253 aa).

The tract at residues 62-107 is disordered; the sequence is WGSGRGVSHVPRLKNSSRAARVPHAKGGRRAHPPKPEADRSEKVNT. Residues 82 to 94 are compositionally biased toward basic residues; sequence RVPHAKGGRRAHP. The span at 95 to 107 shows a compositional bias: basic and acidic residues; the sequence is PKPEADRSEKVNT.

It belongs to the universal ribosomal protein uL4 family. As to quaternary structure, part of the 50S ribosomal subunit.

In terms of biological role, one of the primary rRNA binding proteins, this protein initially binds near the 5'-end of the 23S rRNA. It is important during the early stages of 50S assembly. It makes multiple contacts with different domains of the 23S rRNA in the assembled 50S subunit and ribosome. Forms part of the polypeptide exit tunnel. This is Large ribosomal subunit protein uL4 from Methanosarcina mazei (strain ATCC BAA-159 / DSM 3647 / Goe1 / Go1 / JCM 11833 / OCM 88) (Methanosarcina frisia).